Here is an 86-residue protein sequence, read N- to C-terminus: U15-lycotoxin-Ls1d (86 aa).

The first 20 residues, 1 to 20 (MNSKIFAVLFLLAFLSCVLS), serve as a signal peptide directing secretion. The 46-residue stretch at 21 to 66 (DQYCPKSSITACKKMNIRNDCCKDDDCTGGSWCCATPCGNFCKYPT) folds into the WAP domain. Disulfide bonds link Cys-24/Cys-54, Cys-32/Cys-58, Cys-41/Cys-53, Cys-42/Cys-80, and Cys-47/Cys-62.

It belongs to the venom protein 11 family. 01 (wap-1) subfamily. Post-translationally, contains 5 disulfide bonds. Expressed by the venom gland.

The protein resides in the secreted. In terms of biological role, has antibacterial activity. The sequence is that of U15-lycotoxin-Ls1d from Lycosa singoriensis (Wolf spider).